A 30-amino-acid polypeptide reads, in one-letter code: Cycloviolacin-O1 (30 aa).

Residues 1-30 (GIPCAESCVYIPCTVTALLGCSCSNRVCYN) constitute a cross-link (cyclopeptide (Gly-Asn)). Disulfide bonds link C4-C21, C8-C23, and C13-C28.

This is a cyclic peptide. Expressed in leaves, petals, petioles and roots but not in runners (at protein level).

Functionally, probably participates in a plant defense mechanism. The sequence is that of Cycloviolacin-O1 from Viola odorata (Sweet violet).